The chain runs to 367 residues: Uroporphyrinogen decarboxylase (367 aa).

An N-acetylmethionine modification is found at Met-1. Arg-37, Ala-39, Arg-41, Arg-50, Asp-86, Tyr-164, Ser-219, and His-339 together coordinate coproporphyrinogen I. Coproporphyrinogen III contacts are provided by Arg-37, Ala-39, and Arg-41. 4 residues coordinate coproporphyrinogen III: Asp-86, Tyr-164, Ser-219, and His-339.

This sequence belongs to the uroporphyrinogen decarboxylase family. As to quaternary structure, homodimer.

It localises to the cytoplasm. Its subcellular location is the cytosol. It catalyses the reaction uroporphyrinogen III + 4 H(+) = coproporphyrinogen III + 4 CO2. It carries out the reaction uroporphyrinogen I + 4 H(+) = coproporphyrinogen I + 4 CO2. It participates in porphyrin-containing compound metabolism; protoporphyrin-IX biosynthesis; coproporphyrinogen-III from 5-aminolevulinate: step 4/4. In terms of biological role, catalyzes the sequential decarboxylation of the four acetate side chains of uroporphyrinogen to form coproporphyrinogen and participates in the fifth step in the heme biosynthetic pathway. Isomer I or isomer III of uroporphyrinogen may serve as substrate, but only coproporphyrinogen III can ultimately be converted to heme. In vitro also decarboxylates pentacarboxylate porphyrinogen I. This is Uroporphyrinogen decarboxylase from Ovis aries (Sheep).